A 657-amino-acid chain; its full sequence is MSEITDDRQQVIITLPDGSERTYSSGVTGLEIAESIGKKLAEAALAFTIDGKPRDLDTPVTENARVSIITFDSPEGKEIFWHSSSHLMAHAIEELFPGAKFGAGPAIEQGFYYDIACEHRFNEEDLRAIEAKMLEISKRNLSINREEMPREQAIEYFSNERKDPYKVEILEDTLKDVPTVSVYHQDGFADLCSGPHLPSTGKVKAVLLTNISSSYWRGDSSRETMQRIYGITFPSDKLLKEHIARLEEARKRDHRKLGAELGLFMLTPEVGSGLPIWLPNGAIIRNELETFLKAEQRKRGYVPVYTPHIGNIELYKRSGHYPYYSDSQFPPLTYKDETGREEQYLLKPMNCPHHHLIYSQTLRSYRDLPIRLTEFGTVYRHEQSGELNGLVRARGFTQDDSHIYCRPDQLVDEICNAIDLTRFVFNTLGFDEVETRLSLHDPENQSKYGGTAEVWGQAEKDVKEAADRMGIKYFIGIGEASFYGPKIDFIVRDAIGRKWQLGTVQVDYVMPERFDLSYIGSDGQKHRPVVIHRAPFGSMERFIGVLIEHTAGNFPLWLAPVQAVVLPIAEEVHDYAREVYAKLHEAGIRTELDLRSEKIGKKIREAELSKIPAMLVIGRNEQEKGEVSLRRHRKGDEGSFGVDELIARLCEERDRRF.

A TGS domain is found at 7 to 70 (DRQQVIITLP…TENARVSIIT (64 aa)). The segment at 253–555 (DHRKLGAELG…LIEHTAGNFP (303 aa)) is catalytic. Zn(2+)-binding residues include Cys-351, His-402, and His-532.

Belongs to the class-II aminoacyl-tRNA synthetase family. Homodimer. Requires Zn(2+) as cofactor.

It is found in the cytoplasm. It catalyses the reaction tRNA(Thr) + L-threonine + ATP = L-threonyl-tRNA(Thr) + AMP + diphosphate + H(+). Its function is as follows. Catalyzes the attachment of threonine to tRNA(Thr) in a two-step reaction: L-threonine is first activated by ATP to form Thr-AMP and then transferred to the acceptor end of tRNA(Thr). Also edits incorrectly charged L-seryl-tRNA(Thr). In Chlorobaculum tepidum (strain ATCC 49652 / DSM 12025 / NBRC 103806 / TLS) (Chlorobium tepidum), this protein is Threonine--tRNA ligase.